A 262-amino-acid chain; its full sequence is Small ribosomal subunit protein uS2 (262 aa).

Positions 228-262 are disordered; that stretch reads VSNEEVAAEQNIDLDESKEATEAETTEENTSVESN.

Belongs to the universal ribosomal protein uS2 family.

The protein is Small ribosomal subunit protein uS2 of Staphylococcus saprophyticus subsp. saprophyticus (strain ATCC 15305 / DSM 20229 / NCIMB 8711 / NCTC 7292 / S-41).